We begin with the raw amino-acid sequence, 147 residues long: uncharacterized protein (147 aa).

This is an uncharacterized protein from Mycolicibacterium smegmatis (Mycobacterium smegmatis).